The sequence spans 397 residues: CCA-adding enzyme (397 aa).

Residues Gly-26 and Arg-29 each contribute to the ATP site. Gly-26 and Arg-29 together coordinate CTP. 2 residues coordinate Mg(2+): Asp-39 and Asp-41. Residues Arg-110, Asp-153, Arg-156, Arg-159, and Arg-162 each contribute to the ATP site. Residues Arg-110, Asp-153, Arg-156, Arg-159, and Arg-162 each contribute to the CTP site.

Belongs to the tRNA nucleotidyltransferase/poly(A) polymerase family. Bacterial CCA-adding enzyme type 3 subfamily. Homodimer. Mg(2+) is required as a cofactor.

It catalyses the reaction a tRNA precursor + 2 CTP + ATP = a tRNA with a 3' CCA end + 3 diphosphate. The enzyme catalyses a tRNA with a 3' CCA end + 2 CTP + ATP = a tRNA with a 3' CCACCA end + 3 diphosphate. Its function is as follows. Catalyzes the addition and repair of the essential 3'-terminal CCA sequence in tRNAs without using a nucleic acid template. Adds these three nucleotides in the order of C, C, and A to the tRNA nucleotide-73, using CTP and ATP as substrates and producing inorganic pyrophosphate. tRNA 3'-terminal CCA addition is required both for tRNA processing and repair. Also involved in tRNA surveillance by mediating tandem CCA addition to generate a CCACCA at the 3' terminus of unstable tRNAs. While stable tRNAs receive only 3'-terminal CCA, unstable tRNAs are marked with CCACCA and rapidly degraded. The polypeptide is CCA-adding enzyme (Bacillus cereus (strain ATCC 10987 / NRS 248)).